A 186-amino-acid polypeptide reads, in one-letter code: Trafficking protein particle complex subunit 5 (186 aa).

The protein belongs to the TRAPP small subunits family. BET3 subfamily. As to quaternary structure, part of the multisubunit TRAPP (transport protein particle) complex.

It is found in the golgi apparatus. It localises to the cis-Golgi network. Its subcellular location is the endoplasmic reticulum. Its function is as follows. May play a role in vesicular transport from endoplasmic reticulum to Golgi. This Dictyostelium discoideum (Social amoeba) protein is Trafficking protein particle complex subunit 5 (trappc5).